A 115-amino-acid chain; its full sequence is MAVTLDRAVEASEIVDALKPFGVTQVDVAAVIQVSDRAVRGWRTGDIRPERYDRLAQLRDLVLLLSDSLTPRGVGQWLHAKNRLLDGQRPVDLLAKDRYEDVRSAAESFIDGAYV.

The protein belongs to the MbcA/ParS/Xre antitoxin family. Forms a heterotetramer with cognate toxin Rv3189.

Its function is as follows. Probable antitoxin component of a type II toxin-antitoxin (TA) system. Neutralizes the activity of cognate toxin Rv3189 by blocking access to the toxin active site. The sequence is that of Probable mycobacterial cidal antitoxin Rv3188 from Mycobacterium tuberculosis (strain ATCC 25618 / H37Rv).